Consider the following 324-residue polypeptide: Protein SRC2 homolog (324 aa).

The C2 domain maps to 1 to 111 (MECRSLDLTI…LDQNKGDEEK (111 aa)). At 1 to 279 (MECRSLDLTI…KPQKPKKHGK (279 aa)) the chain is on the cytoplasmic side. Residues 141–281 (GSSSGPHAPV…QKPKKHGKAG (141 aa)) form a disordered region. 2 stretches are compositionally biased toward low complexity: residues 166–175 (YPPGHGAPSA) and 246–269 (PYGY…QAHG). Over residues 270-279 (KPQKPKKHGK) the composition is skewed to basic residues. Residues 280–300 (AGAGMGLGLGLGAGLLGGLLV) form a helical; Signal-anchor membrane-spanning segment. The Lumenal portion of the chain corresponds to 301–324 (GEAVSDIADMGDMGDMGDMGGFDF).

Interacts with RBOHF (via N-terminus).

It is found in the endoplasmic reticulum membrane. It localises to the protein storage vacuole membrane. Its subcellular location is the cell membrane. Functionally, may act as an activator of the calcium-dependent activation of RBOHF that mediates reactive oxygen species (ROS) production and may play a role in cold responses. The sequence is that of Protein SRC2 homolog from Arabidopsis thaliana (Mouse-ear cress).